The primary structure comprises 200 residues: NAD(P)H-dependent FMN reductase C4B3.06c (200 aa).

Residues arginine 22, 96–99, and tyrosine 126 contribute to the FMN site; that span reads QYNG.

As to quaternary structure, homodimer.

The protein localises to the cytoplasm. It is found in the nucleus. The catalysed reaction is FMNH2 + NADP(+) = FMN + NADPH + 2 H(+). It carries out the reaction FMNH2 + NAD(+) = FMN + NADH + 2 H(+). Its function is as follows. Has several reductase activities that are NAD(P)H-dependent and involve FMN as a cofactor. May be involved in ferric iron assimilation. In Schizosaccharomyces pombe (strain 972 / ATCC 24843) (Fission yeast), this protein is NAD(P)H-dependent FMN reductase C4B3.06c.